Consider the following 315-residue polypeptide: Probable cytochrome c oxidase subunit 2 (315 aa).

One can recognise an RPE1 insert domain in the interval 6-53 (RHLSKPAYREEFKGDTSPRTAAYISNRADASLGSTYKLPLEAKFWKMS). A run of 3 helical transmembrane segments spans residues 41–61 (YKLPLEAKFWKMSIALICFLI), 96–116 (LLYISTAIVLFVAGLLGFVCI), and 133–153 (VLIEIIWTVIPIIILVIIAVP). The Cu cation site is built by His-235, Cys-270, Cys-274, and His-278.

Belongs to the cytochrome c oxidase subunit 2 family. Requires Cu cation as cofactor. Heme is required as a cofactor.

It is found in the cell membrane. The catalysed reaction is 4 Fe(II)-[cytochrome c] + O2 + 8 H(+)(in) = 4 Fe(III)-[cytochrome c] + 2 H2O + 4 H(+)(out). Its function is as follows. Subunits I and II form the functional core of the enzyme complex. Electrons originating in cytochrome c are transferred via heme a and Cu(A) to the binuclear center formed by heme a3 and Cu(B). This Rickettsia felis (strain ATCC VR-1525 / URRWXCal2) (Rickettsia azadi) protein is Probable cytochrome c oxidase subunit 2 (ctaC).